A 344-amino-acid polypeptide reads, in one-letter code: Probable aldo-keto reductase 1 (344 aa).

Tyr63 functions as the Proton donor in the catalytic mechanism. His130 lines the substrate pocket. 209-219 (SPLGLGFFAAG) provides a ligand contact to NADP(+).

This sequence belongs to the aldo/keto reductase family.

The sequence is that of Probable aldo-keto reductase 1 from Arabidopsis thaliana (Mouse-ear cress).